Consider the following 142-residue polypeptide: Hemoglobin subunit alpha (142 aa).

The 141-residue stretch at 2–142 (VLSDANKQEI…LVHQLSSKYR (141 aa)) folds into the Globin domain. H60 serves as a coordination point for O2. Residue H89 participates in heme b binding.

This sequence belongs to the globin family. In terms of assembly, heterotetramer of two alpha chains and two beta chains. Red blood cells.

Involved in oxygen transport from gills to the various peripheral tissues. The protein is Hemoglobin subunit alpha (HBA) of Bathyraja eatonii (Eaton's skate).